The sequence spans 223 residues: ATP synthase subunit a 2 (223 aa).

Transmembrane regions (helical) follow at residues 17 to 37, 77 to 97, 106 to 126, 173 to 193, and 195 to 215; these read VAITRPVVTTWVIMAALALVC, FLPLLGTLIIFLVVANLSGVL, KIETPAALALIVFFSVHYFGV, FIIGLVVALAGLFVPIPLMAL, and ILVGLVQAYIFTVLATVFIGA.

It belongs to the ATPase A chain family. In terms of assembly, F-type ATPases have 2 components, CF(1) - the catalytic core - and CF(0) - the membrane proton channel. CF(1) has five subunits: alpha(3), beta(3), gamma(1), delta(1), epsilon(1). CF(0) has four main subunits: a, b, b' and c.

It is found in the cell inner membrane. Its function is as follows. Key component of the proton channel; it plays a direct role in the translocation of protons across the membrane. The protein is ATP synthase subunit a 2 of Bradyrhizobium sp. (strain BTAi1 / ATCC BAA-1182).